The chain runs to 544 residues: Chaperonin GroEL 2 (544 aa).

ATP contacts are provided by residues 29–32 (TLGP), 86–90 (DGTTT), G413, 479–481 (NAA), and D495.

This sequence belongs to the chaperonin (HSP60) family. As to quaternary structure, forms a cylinder of 14 subunits composed of two heptameric rings stacked back-to-back. Interacts with the co-chaperonin GroES.

Its subcellular location is the cytoplasm. The enzyme catalyses ATP + H2O + a folded polypeptide = ADP + phosphate + an unfolded polypeptide.. In terms of biological role, together with its co-chaperonin GroES, plays an essential role in assisting protein folding. The GroEL-GroES system forms a nano-cage that allows encapsulation of the non-native substrate proteins and provides a physical environment optimized to promote and accelerate protein folding. The polypeptide is Chaperonin GroEL 2 (Prochlorococcus marinus subsp. pastoris (strain CCMP1986 / NIES-2087 / MED4)).